The chain runs to 200 residues: Large ribosomal subunit protein bL25 (200 aa).

Belongs to the bacterial ribosomal protein bL25 family. CTC subfamily. Part of the 50S ribosomal subunit; part of the 5S rRNA/L5/L18/L25 subcomplex. Contacts the 5S rRNA. Binds to the 5S rRNA independently of L5 and L18.

This is one of the proteins that binds to the 5S RNA in the ribosome where it forms part of the central protuberance. The protein is Large ribosomal subunit protein bL25 of Corynebacterium glutamicum (strain ATCC 13032 / DSM 20300 / JCM 1318 / BCRC 11384 / CCUG 27702 / LMG 3730 / NBRC 12168 / NCIMB 10025 / NRRL B-2784 / 534).